A 267-amino-acid polypeptide reads, in one-letter code: 4-hydroxy-tetrahydrodipicolinate reductase (267 aa).

NAD(+) is bound by residues 8-13 (GAAGRM) and Asp34. Arg35 contacts NADP(+). Residues 98–100 (GTT) and 122–125 (AANF) each bind NAD(+). The Proton donor/acceptor role is filled by His155. His156 provides a ligand contact to (S)-2,3,4,5-tetrahydrodipicolinate. Lys159 functions as the Proton donor in the catalytic mechanism. 165-166 (GT) is a binding site for (S)-2,3,4,5-tetrahydrodipicolinate.

This sequence belongs to the DapB family.

It is found in the cytoplasm. The catalysed reaction is (S)-2,3,4,5-tetrahydrodipicolinate + NAD(+) + H2O = (2S,4S)-4-hydroxy-2,3,4,5-tetrahydrodipicolinate + NADH + H(+). The enzyme catalyses (S)-2,3,4,5-tetrahydrodipicolinate + NADP(+) + H2O = (2S,4S)-4-hydroxy-2,3,4,5-tetrahydrodipicolinate + NADPH + H(+). It functions in the pathway amino-acid biosynthesis; L-lysine biosynthesis via DAP pathway; (S)-tetrahydrodipicolinate from L-aspartate: step 4/4. Its function is as follows. Catalyzes the conversion of 4-hydroxy-tetrahydrodipicolinate (HTPA) to tetrahydrodipicolinate. This is 4-hydroxy-tetrahydrodipicolinate reductase from Pseudomonas putida (strain W619).